A 1055-amino-acid polypeptide reads, in one-letter code: Type I restriction enzyme HindI endonuclease subunit (1055 aa).

The Helicase ATP-binding domain maps to T287–I468.

Belongs to the HsdR family. In terms of assembly, the type I restriction/modification system is composed of three polypeptides R, M and S; the restriction enzyme has stoichiometry R(2)M(2)S(1) while the methyltransferase is M(2)S(1).

The catalysed reaction is Endonucleolytic cleavage of DNA to give random double-stranded fragments with terminal 5'-phosphates, ATP is simultaneously hydrolyzed.. Functionally, the restriction (R) subunit of a type I restriction enzyme that recognizes 5'-RAACN(5)TAG-3' and cleaves a random distance away. Subunit R is required for both nuclease and ATPase activities, but not for modification. After locating a non-methylated recognition site, the enzyme complex serves as a molecular motor that translocates DNA in an ATP-dependent manner until a collision occurs that triggers cleavage. This is Type I restriction enzyme HindI endonuclease subunit from Haemophilus influenzae (strain ATCC 51907 / DSM 11121 / KW20 / Rd).